Here is a 731-residue protein sequence, read N- to C-terminus: Vezatin (731 aa).

2 consecutive transmembrane segments (helical) span residues 91–111 (LATP…LLVM) and 114–134 (TWWI…YLVI). Positions 382–414 (VRSLQLHLKALLNEVIILEDELEKLVCTKETQE) form a coiled coil. 2 disordered regions span residues 570 to 671 (PVDP…DSLQ) and 710 to 731 (QTFG…IEEK). The segment covering 577–586 (ISNSEPSMNS) has biased composition (polar residues). Residues 590 to 601 (KVSKNDTEEESS) are compositionally biased toward basic and acidic residues. A compositionally biased stretch (polar residues) spans 658–671 (GLTTAPPTPRDSLQ). Acidic residues predominate over residues 712–721 (FGDEEEEQII). Residues 722–731 (EENKNKIEEK) are compositionally biased toward basic and acidic residues.

It belongs to the vezatin family. As to quaternary structure, interacts with USH2A (via the cytoplasmic region); the interaction associates VEZT with the USH2 complex at the stereocilia base. Interacts with myosin MYO7A and the cadherin-catenins complex.

Its subcellular location is the cell membrane. It is found in the cell projection. It localises to the stereocilium membrane. The protein localises to the cell junction. The protein resides in the adherens junction. Its subcellular location is the nucleus. It is found in the cytoplasmic vesicle. It localises to the secretory vesicle. The protein localises to the acrosome. Plays a pivotal role in the establishment of adherens junctions and their maintenance in adult life. Required for morphogenesis of the preimplantation embryo, and for the implantation process. This is Vezatin (VEZT) from Pongo abelii (Sumatran orangutan).